The chain runs to 183 residues: Apo-citrate lyase phosphoribosyl-dephospho-CoA transferase (183 aa).

This sequence belongs to the CitX family.

The catalysed reaction is apo-[citrate lyase ACP] + 2'-(5''-triphospho-alpha-D-ribosyl)-3'-dephospho-CoA = holo-[citrate lyase ACP] + diphosphate. In terms of biological role, transfers 2-(5''-triphosphoribosyl)-3'-dephosphocoenzyme-A on a serine residue to the apo-acyl carrier protein (gamma chain) of the citrate lyase to yield holo-acyl carrier protein. The polypeptide is Apo-citrate lyase phosphoribosyl-dephospho-CoA transferase (Escherichia coli O9:H4 (strain HS)).